The chain runs to 912 residues: Brevican core protein (912 aa).

The N-terminal stretch at Met-1 to Ala-22 is a signal peptide. An Ig-like V-type domain is found at Arg-36 to Lys-155. Disulfide bonds link Cys-57-Cys-137, Cys-179-Cys-250, Cys-203-Cys-224, Cys-277-Cys-352, and Cys-301-Cys-322. An N-linked (GlcNAc...) asparagine glycan is attached at Asn-130. 2 Link domains span residues Val-157 to Ala-252 and Gly-257 to Arg-354. Asn-337 carries an N-linked (GlcNAc...) asparagine glycan. Disordered stretches follow at residues Ile-408–Ala-427 and Ser-438–Cys-651. Ser-418 carries the post-translational modification Phosphoserine. O-linked (Xyl...) (chondroitin sulfate) serine glycosylation is present at Ser-418. Basic and acidic residues predominate over residues Glu-448–Glu-463. The span at Glu-464–Ala-478 shows a compositional bias: acidic residues. The span at Val-520–Leu-537 shows a compositional bias: pro residues. The segment covering Gly-603–Arg-617 has biased composition (basic and acidic residues). Residues Ser-647–Asp-683 enclose the EGF-like domain. Cystine bridges form between Cys-651–Cys-662, Cys-656–Cys-671, Cys-673–Cys-682, Cys-689–Cys-700, Cys-717–Cys-809, Cys-785–Cys-801, Cys-816–Cys-859, and Cys-845–Cys-872. Residues Asp-683–Met-811 enclose the C-type lectin domain. The 61-residue stretch at Val-814–Pro-874 folds into the Sushi domain.

The protein belongs to the aggrecan/versican proteoglycan family. Interacts with TNR. O-glycosylated; contains chondroitin sulfate. Brain; expressed in cerebellar astrocytes but not in neurons.

It is found in the secreted. The protein resides in the extracellular space. Its subcellular location is the extracellular matrix. Functionally, may play a role in the terminally differentiating and the adult nervous system during postnatal development. Could stabilize interactions between hyaluronan (HA) and brain proteoglycans. This Bos taurus (Bovine) protein is Brevican core protein (BCAN).